The following is a 255-amino-acid chain: 14-3-3-like protein B (255 aa).

This sequence belongs to the 14-3-3 family.

This chain is 14-3-3-like protein B, found in Nicotiana tabacum (Common tobacco).